Here is a 678-residue protein sequence, read N- to C-terminus: UvrABC system protein C (678 aa).

The GIY-YIG domain occupies 16-95 (VEPGVYRFRD…IKEFDPRFNI (80 aa)). A UVR domain is found at 208 to 243 (DRLIREMEQQMNAAAEELDFERAARLRDNIGAMRRA). A disordered region spans residues 477–508 (HLRDAEAAPEGRPEQGPRASARPEQGPRASAR). A compositionally biased stretch (basic and acidic residues) spans 479–491 (RDAEAAPEGRPEQ).

It belongs to the UvrC family. In terms of assembly, interacts with UvrB in an incision complex.

It localises to the cytoplasm. Its function is as follows. The UvrABC repair system catalyzes the recognition and processing of DNA lesions. UvrC both incises the 5' and 3' sides of the lesion. The N-terminal half is responsible for the 3' incision and the C-terminal half is responsible for the 5' incision. The sequence is that of UvrABC system protein C from Mycolicibacterium vanbaalenii (strain DSM 7251 / JCM 13017 / BCRC 16820 / KCTC 9966 / NRRL B-24157 / PYR-1) (Mycobacterium vanbaalenii).